The sequence spans 400 residues: MSDNPADLPVLVAGGGIGGLAAALALVRRGFSVKVLEQAPEIGEIGAGIQLGPNAFHAFDALGIGEKARGRAVYTDEMVMHDAIDGSLVGRIPTGEAFRQRFGNPYAVIHRVDVHLSLLEGAQETGKVEFLTSTRALRIEQDEGSVTVYDQHGNAHKGIALIGADGVKSVVREQFVGDAARVTGHVVYRAVVDKKDFPESLQWNAASIWVGPNCHLVHYPLRGGEQYNVVVTFHSRQPEQWGVTEGSKEEVQSYFQGICPQARQLIDLPKTWKRWATADREPIGQWSFGRVTLLGDAAHPTTQYMAQGACMAMEDGVTLGEALRVNNNDFPKAFELYQRSRVARTARIVLSSREMGRIYHAQGVERLVRNDLWKGRTPERFYDAMEWLYGWNVGNCLAKD.

It belongs to the 3-hydroxybenzoate 6-hydroxylase family. Monomer. FAD is required as a cofactor.

The catalysed reaction is 3-hydroxybenzoate + NADH + O2 + H(+) = 2,5-dihydroxybenzoate + NAD(+) + H2O. Catalyzes the NAD- or NADP-dependent conversion of 3-hydroxybenzoate to gentisate. The affinity of the enzyme toward NAD is twice as high as for NADP. The chain is 3-hydroxybenzoate 6-hydroxylase (nagX) from Polaromonas naphthalenivorans (strain CJ2).